The sequence spans 1199 residues: Tubulin monoglutamylase TTLL4 (1199 aa).

Polar residues predominate over residues 1–25; it reads MASAGTQHYSIGLRQKNSFKQSGPS. Disordered regions lie at residues 1 to 43, 472 to 517, and 525 to 544; these read MASA…RVWP, IQLG…ELVD, and RDEN…SAVS. Over residues 477 to 495 the composition is skewed to basic and acidic residues; sequence SEKERPEEARELDSSDRDI. The segment covering 506 to 517 has biased composition (acidic residues); sequence AETEDTEEELVD. Residues 604–947 enclose the TTL domain; that stretch reads RKLLRWKMST…VLPNAEDIIS (344 aa). Ser-691 is modified (phosphoserine). Residues Lys-721, 727-728, 749-752, and 762-764 each bind ATP; these read RG, QRYL, and KFD. Position 727 (Arg-727) interacts with a protein. Arg-788 provides a ligand contact to L-glutamate. 809–810 provides a ligand contact to ATP; it reads TN. Residues Tyr-811, Ser-812, and Lys-833 each contribute to the L-glutamate site. Residues Asp-893, Glu-906, and Asn-908 each contribute to the Mg(2+) site. Residues 918-1029 form a c-MTBD region region; the sequence is PLDISIKGQM…RGQFERIFPS (112 aa). Position 924 (Lys-924) interacts with L-glutamate. A compositionally biased stretch (polar residues) spans 1130-1141; it reads GTTPKSKKTQAG. The interval 1130–1199 is disordered; sequence GTTPKSKKTQ…ISDSLLAVSP (70 aa). Basic and acidic residues predominate over residues 1151–1160; it reads SSKDSEDTSK. Over residues 1164–1192 the composition is skewed to polar residues; sequence LSTQTLPVIKCSGQTSRLSASSTFQSISD.

Belongs to the tubulin--tyrosine ligase family. Mg(2+) serves as cofactor.

Its subcellular location is the cytoplasm. It is found in the cell projection. It localises to the cilium. The protein localises to the cytoskeleton. The protein resides in the cilium basal body. The enzyme catalyses L-glutamyl-[protein] + L-glutamate + ATP = gamma-L-glutamyl-L-glutamyl-[protein] + ADP + phosphate + H(+). Monoglutamylase which modifies both tubulin and non-tubulin proteins, adding a single glutamate on the gamma-carboxyl group of specific glutamate residues of target proteins. Involved in the side-chain initiation step of the polyglutamylation reaction but not in the elongation step. Preferentially modifies beta-tail tubulin over the alpha-tubulin. Monoglutamylates nucleosome assembly proteins NAP1L1 and NAP1L4. Monoglutamylates nucleotidyltransferase CGAS, leading to inhibition of CGAS catalytic activity, thereby preventing antiviral defense function. Involved in KLF4 glutamylation which impedes its ubiquitination, thereby leading to somatic cell reprogramming, pluripotency maintenance and embryogenesis. This chain is Tubulin monoglutamylase TTLL4, found in Homo sapiens (Human).